The chain runs to 494 residues: Glutamate--tRNA ligase (494 aa).

Positions 10-20 (PSPTGDPHVGT) match the 'HIGH' region motif. C107, C109, C134, and H136 together coordinate Zn(2+). The 'KMSKS' region signature appears at 251–255 (KLSKR). K254 contacts ATP.

It belongs to the class-I aminoacyl-tRNA synthetase family. Glutamate--tRNA ligase type 1 subfamily. As to quaternary structure, monomer. Zn(2+) is required as a cofactor.

It is found in the cytoplasm. It carries out the reaction tRNA(Glu) + L-glutamate + ATP = L-glutamyl-tRNA(Glu) + AMP + diphosphate. Functionally, catalyzes the attachment of glutamate to tRNA(Glu) in a two-step reaction: glutamate is first activated by ATP to form Glu-AMP and then transferred to the acceptor end of tRNA(Glu). The protein is Glutamate--tRNA ligase of Pseudomonas aeruginosa (strain ATCC 15692 / DSM 22644 / CIP 104116 / JCM 14847 / LMG 12228 / 1C / PRS 101 / PAO1).